Here is a 525-residue protein sequence, read N- to C-terminus: GMP synthase [glutamine-hydrolyzing] (525 aa).

One can recognise a Glutamine amidotransferase type-1 domain in the interval 9–207 (RILILDFGSQ…VLTISGCEAL (199 aa)). Cysteine 86 acts as the Nucleophile in catalysis. Residues histidine 181 and glutamate 183 contribute to the active site. The GMPS ATP-PPase domain maps to 208 to 400 (WTPAKIVDDA…LGLPYDMVYR (193 aa)). 235–241 (SGGVDSS) is an ATP binding site.

As to quaternary structure, homodimer.

It catalyses the reaction XMP + L-glutamine + ATP + H2O = GMP + L-glutamate + AMP + diphosphate + 2 H(+). The protein operates within purine metabolism; GMP biosynthesis; GMP from XMP (L-Gln route): step 1/1. Catalyzes the synthesis of GMP from XMP. The chain is GMP synthase [glutamine-hydrolyzing] from Marinobacter nauticus (strain ATCC 700491 / DSM 11845 / VT8) (Marinobacter aquaeolei).